Here is a 94-residue protein sequence, read N- to C-terminus: Integration host factor subunit beta (94 aa).

It belongs to the bacterial histone-like protein family. In terms of assembly, heterodimer of an alpha and a beta chain.

Its function is as follows. This protein is one of the two subunits of integration host factor, a specific DNA-binding protein that functions in genetic recombination as well as in transcriptional and translational control. The polypeptide is Integration host factor subunit beta (Pectobacterium atrosepticum (strain SCRI 1043 / ATCC BAA-672) (Erwinia carotovora subsp. atroseptica)).